Reading from the N-terminus, the 2078-residue chain is Nascent polypeptide-associated complex subunit alpha, muscle-specific form (2078 aa).

Disordered regions lie at residues 1–21, 37–96, 595–614, and 732–1944; these read MPGEATETVPATEQELPQPQA, ALGQ…LGTA, LGEPLPIGKPASSMTSPLGV, and KSVP…KAMS. Composition is skewed to polar residues over residues 9–21 and 60–75; these read VPATEQELPQPQA and AANQASPFPSPSTIAS. Residues 775–786 show a composition bias toward low complexity; that stretch reads SGASATASSKGT. A compositionally biased stretch (polar residues) spans 837 to 847; that stretch reads PENSLSFQGSK. Serine 917 carries the post-translational modification Phosphoserine. Residues 933 to 1020 show a composition bias toward pro residues; the sequence is SPSPKGAPTP…PPAVTPPSPK (88 aa). Over residues 1045-1067 the composition is skewed to low complexity; it reads GSPAATPLPKGAPTTPAATLPSP. The span at 1080 to 1113 shows a compositional bias: pro residues; that stretch reads PTPPAATPPSPKGGPATPSPKGAPMPPAATPPSP. The segment covering 1114–1130 has biased composition (low complexity); that stretch reads KGGLATPPHKGAPTTPA. Pro residues-rich tracts occupy residues 1131–1147 and 1154–1170; these read ATPPSPKGGLATPPPKG. Serine 1181 is modified (phosphoserine). Composition is skewed to low complexity over residues 1183–1199, 1206–1222, and 1229–1245; these read KGGLATPSPKGAPTTPA. Pro residues-rich tracts occupy residues 1246-1270 and 1292-1344; these read ATPPSPKGGPATPPPKGAPTPPAAT and VTPP…PSPK. Positions 1345-1366 are enriched in low complexity; the sequence is GTPTLPATTPSSKGGPTTPSSK. Residues serine 1397 and serine 1474 each carry the phosphoserine modification. The span at 1470–1481 shows a compositional bias: pro residues; the sequence is VTPPSPKEPPAP. Positions 1485–1507 are enriched in low complexity; the sequence is ATSSSPKKAPATPAPMGAPTLPA. A compositionally biased stretch (pro residues) spans 1611–1625; the sequence is KEAPTPPAVTPPSPE. Residues 1626-1637 are compositionally biased toward low complexity; that stretch reads KGPATPAPKGTP. The segment covering 1647–1656 has biased composition (polar residues); sequence LKDSPTSPAS. The span at 1744–1756 shows a compositional bias: basic and acidic residues; it reads DSSKTAKGKDASH. Residues 1794 to 1811 show a composition bias toward pro residues; it reads PSPPVSLPLAPSPVPTLP. A PXLXP motif is present at residues 1841–1845; the sequence is LPLIP. A compositionally biased stretch (polar residues) spans 1876 to 1891; sequence SAKQPVTKNNKGSGTE. A compositionally biased stretch (acidic residues) spans 1892-1905; it reads SDSDESVPELEEQD. Residue serine 1906 is modified to Phosphoserine; by ILK1. Positions 1907–1920 are enriched in low complexity; sequence TQATTQQAQLAAAA. The required for DNA-binding stretch occupies residues 1932 to 1943; sequence QSRSEKKARKAM. In terms of domain architecture, NAC-A/B spans 1933–1998; it reads SRSEKKARKA…AKIEDLSQQA (66 aa). Phosphoserine is present on serine 1995. Lysine 2005 carries the post-translational modification N6-acetyllysine; alternate. Lysine 2005 participates in a covalent cross-link: Glycyl lysine isopeptide (Lys-Gly) (interchain with G-Cter in SUMO2); alternate. Threonine 2022 carries the post-translational modification Phosphothreonine; by GSK3-beta. The residue at position 2024 (threonine 2024) is a Phosphothreonine. Serine 2029, serine 2049, serine 2054, and serine 2066 each carry phosphoserine. Positions 2039 to 2078 constitute a UBA domain; it reads VEVKDIELVMSQANVSRAKAVRALKNNSNDIVNAIMELTM.

As to quaternary structure, interacts (via PXLXP motif) with the muscle-restricted histone methyltransferase SMYD1 (via MYND-type zinc finger).

It is found in the cytoplasm. It localises to the nucleus. Its function is as follows. Cardiac- and muscle-specific transcription factor. May act to regulate the expression of genes involved in the development of myotubes. Plays a critical role in ventricular cardiomyocyte expansion and regulates postnatal skeletal muscle growth and regeneration. Involved in the organized assembly of thick and thin filaments of myofibril sarcomeres. In Homo sapiens (Human), this protein is Nascent polypeptide-associated complex subunit alpha, muscle-specific form (NACA).